We begin with the raw amino-acid sequence, 287 residues long: Uroporphyrinogen-III C-methyltransferase (287 aa).

A compositionally biased stretch (polar residues) spans Met1–Ala10. The disordered stretch occupies residues Met1–Val24. S-adenosyl-L-methionine is bound by residues Pro40, Gly116–Asp118, Thr146, and Met199.

Belongs to the precorrin methyltransferase family.

It carries out the reaction uroporphyrinogen III + 2 S-adenosyl-L-methionine = precorrin-2 + 2 S-adenosyl-L-homocysteine + H(+). The protein operates within porphyrin-containing compound metabolism; siroheme biosynthesis; precorrin-2 from uroporphyrinogen III: step 1/1. In terms of biological role, catalyzes the methylation of both C-2 and C-7 of uroporphyrinogen III leading to precorrin-1 and precorrin-2; their oxidative esterification gives respectively factor I octamethyl ester and sirohydrochlorin. Inactivation of uroporphyrinogen-III methyltransferase results in the loss of nitrite and nitric oxide reductase activities, but not of nitrous oxide reductase activity. Likely involved in heme D1 biosynthesis. This is Uroporphyrinogen-III C-methyltransferase (nirE) from Paracoccus denitrificans (strain Pd 1222).